The sequence spans 528 residues: MEKRVVIAVILSIAVLYAYSMIFPPPQKKDVVKPGPVPQSQTAPVQAVSSTSVLPAIMQQGNVSVRDLVVETDLFTAVFSTRGAGLKKLVLKRYKETSGPGGREVVLVNEEAAEKFSLLTEGKSFGIEPTVVYNSISNGLKLAGNEKGTLEFTSTSPTGIVFKKSYIFTGNDYRIDLHQELLNNSPTKFDGSLHLIGNNRIEAKPGDGRFEVYGPVTLADDKINTEKVADFSKGPKQYDKNILWTAFADKYFMNAILSDNNSIAAVRLAKVNTNYLQDDVSSPPLALNPGQSAAVNYRIFYGPKDLEILKGQGSRLEEAIDFGWFSALAKPLLRTLKFFYSYTHNYGIAIIIITVILKLLFFPLTHKSYKSMKEMQKLQPKMAELKEKFKNDRDAMNRAVMDLYKTHKVNPMGGCLPMIVQIPVFFALYKALMFSIELRHAPFMLWIMDLSAKDPYYVTPVIMGVTMFVQQKMTPSNMDPVQAKMMLALPVVFTFMFLNFPSGLVLYWLVNNILTIAQQTYINKSLPS.

The next 4 helical transmembrane spans lie at 5–25 (VVIA…IFPP), 346–366 (YGIA…PLTH), 416–436 (LPMI…MFSI), and 486–506 (MLAL…GLVL).

This sequence belongs to the OXA1/ALB3/YidC family. Type 1 subfamily. In terms of assembly, interacts with the Sec translocase complex via SecD. Specifically interacts with transmembrane segments of nascent integral membrane proteins during membrane integration.

It is found in the cell inner membrane. Required for the insertion and/or proper folding and/or complex formation of integral membrane proteins into the membrane. Involved in integration of membrane proteins that insert both dependently and independently of the Sec translocase complex, as well as at least some lipoproteins. Aids folding of multispanning membrane proteins. This chain is Membrane protein insertase YidC, found in Geotalea uraniireducens (strain Rf4) (Geobacter uraniireducens).